The primary structure comprises 860 residues: Protein translocase subunit SecA (860 aa).

ATP is bound by residues glutamine 87, 105–109, and aspartate 514; that span reads GEGKT. Cysteine 846, cysteine 848, cysteine 857, and cysteine 858 together coordinate Zn(2+).

Belongs to the SecA family. Monomer and homodimer. Part of the essential Sec protein translocation apparatus which comprises SecA, SecYEG and auxiliary proteins SecDF. Other proteins may also be involved. It depends on Zn(2+) as a cofactor.

It localises to the cell membrane. The protein localises to the cytoplasm. It carries out the reaction ATP + H2O + cellular proteinSide 1 = ADP + phosphate + cellular proteinSide 2.. Functionally, part of the Sec protein translocase complex. Interacts with the SecYEG preprotein conducting channel. Has a central role in coupling the hydrolysis of ATP to the transfer of proteins into and across the cell membrane, serving as an ATP-driven molecular motor driving the stepwise translocation of polypeptide chains across the membrane. The protein is Protein translocase subunit SecA of Endomicrobium trichonymphae.